The sequence spans 211 residues: Dual specificity protein phosphatase 26 (211 aa).

In terms of domain architecture, Tyrosine-protein phosphatase spans 60–207; that stretch reads NHADEVWPGL…LLALDRRLRQ (148 aa). The Phosphocysteine intermediate role is filled by C152.

It belongs to the protein-tyrosine phosphatase family. Non-receptor class dual specificity subfamily. Interacts with HSF4.

It localises to the cytoplasm. The protein localises to the nucleus. Its subcellular location is the golgi apparatus. It carries out the reaction O-phospho-L-tyrosyl-[protein] + H2O = L-tyrosyl-[protein] + phosphate. It catalyses the reaction O-phospho-L-seryl-[protein] + H2O = L-seryl-[protein] + phosphate. The enzyme catalyses O-phospho-L-threonyl-[protein] + H2O = L-threonyl-[protein] + phosphate. Its function is as follows. Inactivates MAPK1 and MAPK3 which leads to dephosphorylation of heat shock factor protein 4 and a reduction in its DNA-binding activity. This is Dual specificity protein phosphatase 26 (DUSP26) from Bos taurus (Bovine).